We begin with the raw amino-acid sequence, 417 residues long: BSD domain-containing protein 1-B (417 aa).

A BSD domain is found at 153 to 205 (WLAYWDPEQRKAEISEPLVTSPSIRALFTKMVPAAVSHSEFWQRYFYKVHQLE). 3 disordered regions span residues 215–234 (KQRA…EEEE), 262–292 (HVED…SISP), and 323–390 (AAET…DFDM). Positions 262 to 278 (HVEDKSEKTAELNRDHT) are enriched in basic and acidic residues. Positions 281 to 292 (TSPSESSESISP) are enriched in low complexity. Residues 332–343 (PVEQTGKSNAQM) show a composition bias toward polar residues. Positions 345 to 356 (THREDPPSDLRV) are enriched in basic and acidic residues. Residues 360-379 (NSDSGKSTPSNNGQKGSSTD) are compositionally biased toward polar residues. Residues 380-390 (VSEDWEKDFDM) show a composition bias toward acidic residues.

This is BSD domain-containing protein 1-B (bsdc1-b) from Xenopus laevis (African clawed frog).